The chain runs to 124 residues: Ribonuclease VapC32 (124 aa).

A PINc domain is found at 2–112; the sequence is ILVDTSVWIE…TRDKRLKAAC (111 aa). 2 residues coordinate Mg(2+): Asp-5 and Asp-86.

This sequence belongs to the PINc/VapC protein family. It depends on Mg(2+) as a cofactor.

Functionally, toxic component of a type II toxin-antitoxin (TA) system. An RNase. Its toxic effect is neutralized by coexpression with cognate antitoxin VapB32. The chain is Ribonuclease VapC32 from Mycobacterium tuberculosis (strain CDC 1551 / Oshkosh).